A 425-amino-acid chain; its full sequence is Glutamyl-tRNA reductase (425 aa).

Residues 49-52 (TCNR), serine 107, 112-114 (EPQ), and glutamine 118 contribute to the substrate site. Cysteine 50 functions as the Nucleophile in the catalytic mechanism. Residue 187 to 192 (GAGETI) coordinates NADP(+).

Belongs to the glutamyl-tRNA reductase family. As to quaternary structure, homodimer.

It carries out the reaction (S)-4-amino-5-oxopentanoate + tRNA(Glu) + NADP(+) = L-glutamyl-tRNA(Glu) + NADPH + H(+). It functions in the pathway porphyrin-containing compound metabolism; protoporphyrin-IX biosynthesis; 5-aminolevulinate from L-glutamyl-tRNA(Glu): step 1/2. Catalyzes the NADPH-dependent reduction of glutamyl-tRNA(Glu) to glutamate 1-semialdehyde (GSA). The sequence is that of Glutamyl-tRNA reductase from Pseudomonas syringae pv. syringae (strain B728a).